A 200-amino-acid polypeptide reads, in one-letter code: Holliday junction branch migration complex subunit RuvA (200 aa).

Residues 1 to 63 (MYAYIKGTLT…EDAQLLYGFI (63 aa)) are domain I. A domain II region spans residues 64-142 (NQEEKDMFLS…INDVDSSQIL (79 aa)). The interval 143–149 (NTDTQDH) is flexible linker. The domain III stretch occupies residues 150-200 (ANAPIIKEALLALEALGYSKRELTKVEKSLSKETFDSVDDAVKRGLQLLIA).

It belongs to the RuvA family. Homotetramer. Forms an RuvA(8)-RuvB(12)-Holliday junction (HJ) complex. HJ DNA is sandwiched between 2 RuvA tetramers; dsDNA enters through RuvA and exits via RuvB. An RuvB hexamer assembles on each DNA strand where it exits the tetramer. Each RuvB hexamer is contacted by two RuvA subunits (via domain III) on 2 adjacent RuvB subunits; this complex drives branch migration. In the full resolvosome a probable DNA-RuvA(4)-RuvB(12)-RuvC(2) complex forms which resolves the HJ.

It is found in the cytoplasm. Functionally, the RuvA-RuvB-RuvC complex processes Holliday junction (HJ) DNA during genetic recombination and DNA repair, while the RuvA-RuvB complex plays an important role in the rescue of blocked DNA replication forks via replication fork reversal (RFR). RuvA specifically binds to HJ cruciform DNA, conferring on it an open structure. The RuvB hexamer acts as an ATP-dependent pump, pulling dsDNA into and through the RuvAB complex. HJ branch migration allows RuvC to scan DNA until it finds its consensus sequence, where it cleaves and resolves the cruciform DNA. The polypeptide is Holliday junction branch migration complex subunit RuvA (Staphylococcus saprophyticus subsp. saprophyticus (strain ATCC 15305 / DSM 20229 / NCIMB 8711 / NCTC 7292 / S-41)).